The sequence spans 148 residues: UPF0756 membrane protein NMC1845 (148 aa).

Helical transmembrane passes span 13–35 (LILL…LLLM), 50–70 (HGLN…LVSG), 80–100 (FLNF…WLAG), and 121–141 (VIGV…AGIL).

It belongs to the UPF0756 family.

Its subcellular location is the cell membrane. This Neisseria meningitidis serogroup C / serotype 2a (strain ATCC 700532 / DSM 15464 / FAM18) protein is UPF0756 membrane protein NMC1845.